The sequence spans 345 residues: Phosphoribosylformylglycinamidine cyclo-ligase (345 aa).

The protein belongs to the AIR synthase family.

The protein resides in the cytoplasm. It catalyses the reaction 2-formamido-N(1)-(5-O-phospho-beta-D-ribosyl)acetamidine + ATP = 5-amino-1-(5-phospho-beta-D-ribosyl)imidazole + ADP + phosphate + H(+). It functions in the pathway purine metabolism; IMP biosynthesis via de novo pathway; 5-amino-1-(5-phospho-D-ribosyl)imidazole from N(2)-formyl-N(1)-(5-phospho-D-ribosyl)glycinamide: step 2/2. The protein is Phosphoribosylformylglycinamidine cyclo-ligase of Pectobacterium atrosepticum (strain SCRI 1043 / ATCC BAA-672) (Erwinia carotovora subsp. atroseptica).